Consider the following 486-residue polypeptide: Secreted protein C (486 aa).

An N-terminal signal peptide occupies residues 1–22 (MKINIILLFVGLILAFAVLSNA). The tract at residues 30 to 332 (GVNPFDNNNS…SGSHGGSSSH (303 aa)) is disordered. Residue Asn37 is glycosylated (N-linked (GlcNAc...) asparagine). Gly residues predominate over residues 41–60 (SGSGSGSGGGSSSSGSGTGQ). A compositionally biased stretch (low complexity) spans 61 to 318 (SSGTVSSSGS…TGSSEYSSSS (258 aa)). Asn73, Asn74, Asn83, Asn112, Asn129, Asn149, and Asn174 each carry an N-linked (GlcNAc...) asparagine glycan.

The protein belongs to the Sct family.

It localises to the secreted. This chain is Secreted protein C, found in Dictyostelium discoideum (Social amoeba).